The following is a 113-amino-acid chain: UPF0482 protein KPN78578_15540 (113 aa).

The first 28 residues, 1 to 28 (MNMTLNKRWCLTAILALSAVVYTSSSYA), serve as a signal peptide directing secretion. Residues 38 to 60 (GDSAQSRQQASMEKEQWNDTRSL) form a disordered region. A compositionally biased stretch (polar residues) spans 39–48 (DSAQSRQQAS). A compositionally biased stretch (basic and acidic residues) spans 49 to 59 (MEKEQWNDTRS).

This sequence belongs to the UPF0482 family.

This is UPF0482 protein KPN78578_15540 from Klebsiella pneumoniae subsp. pneumoniae (strain ATCC 700721 / MGH 78578).